A 179-amino-acid polypeptide reads, in one-letter code: MAELATIARPYAEALFGVAEAGDIAAWSTLVQELAQVARLPEVLSIASSPKVSRAQVSELLLTAVKSPLKDNAQAKNLVQMLVDNHRLPLLPEIAVQFEELKNAREGAADVLIVSAFPLEGAQLNDLVASLERKFKRKLKPTVEVDSSLIGGVRVTVGDEVLDTSVRARLASMQTALTA.

This sequence belongs to the ATPase delta chain family. As to quaternary structure, F-type ATPases have 2 components, F(1) - the catalytic core - and F(0) - the membrane proton channel. F(1) has five subunits: alpha(3), beta(3), gamma(1), delta(1), epsilon(1). F(0) has three main subunits: a(1), b(2) and c(10-14). The alpha and beta chains form an alternating ring which encloses part of the gamma chain. F(1) is attached to F(0) by a central stalk formed by the gamma and epsilon chains, while a peripheral stalk is formed by the delta and b chains.

The protein resides in the cell inner membrane. Functionally, f(1)F(0) ATP synthase produces ATP from ADP in the presence of a proton or sodium gradient. F-type ATPases consist of two structural domains, F(1) containing the extramembraneous catalytic core and F(0) containing the membrane proton channel, linked together by a central stalk and a peripheral stalk. During catalysis, ATP synthesis in the catalytic domain of F(1) is coupled via a rotary mechanism of the central stalk subunits to proton translocation. This protein is part of the stalk that links CF(0) to CF(1). It either transmits conformational changes from CF(0) to CF(1) or is implicated in proton conduction. This chain is ATP synthase subunit delta, found in Paraburkholderia xenovorans (strain LB400).